The primary structure comprises 143 residues: MESSNINALQQPSSIAHHPSKQCASSLNETVKDSPPAIYEDRLEHTPVQLPRDGTPRDVCSVGQLTCRACATKPFRLNRDSQYDYLNTCPGGRHISLALEIITGRWVCIPRVFPDTPEEKWMAPYIIPDREQPSSGDEDSDTD.

Positions 1 to 14 (MESSNINALQQPSS) are enriched in polar residues. The interval 1 to 32 (MESSNINALQQPSSIAHHPSKQCASSLNETVK) is disordered.

This sequence belongs to the varicellovirus ORF32 protein family. In terms of processing, phosphorylated by ORF47 protein.

The sequence is that of Phosphoprotein 32 from Homo sapiens (Human).